A 141-amino-acid polypeptide reads, in one-letter code: Nucleoside diphosphate kinase (141 aa).

The ATP site is built by lysine 10, phenylalanine 58, arginine 86, threonine 92, arginine 103, and asparagine 113. The active-site Pros-phosphohistidine intermediate is histidine 116.

It belongs to the NDK family. Homotetramer. Requires Mg(2+) as cofactor.

The protein resides in the cytoplasm. The enzyme catalyses a 2'-deoxyribonucleoside 5'-diphosphate + ATP = a 2'-deoxyribonucleoside 5'-triphosphate + ADP. It carries out the reaction a ribonucleoside 5'-diphosphate + ATP = a ribonucleoside 5'-triphosphate + ADP. Functionally, major role in the synthesis of nucleoside triphosphates other than ATP. The ATP gamma phosphate is transferred to the NDP beta phosphate via a ping-pong mechanism, using a phosphorylated active-site intermediate. This Hydrogenovibrio crunogenus (strain DSM 25203 / XCL-2) (Thiomicrospira crunogena) protein is Nucleoside diphosphate kinase.